We begin with the raw amino-acid sequence, 60 residues long: UPF0291 protein CTC_01690.1 (60 aa).

This sequence belongs to the UPF0291 family.

The protein localises to the cytoplasm. The protein is UPF0291 protein CTC_01690.1 of Clostridium tetani (strain Massachusetts / E88).